The following is a 363-amino-acid chain: Biotin synthase (363 aa).

In terms of domain architecture, Radical SAM core spans 40 to 268; sequence NVVQVSTLLS…ETQVRLSAGR (229 aa). [4Fe-4S] cluster-binding residues include Cys55, Cys59, and Cys62. 4 residues coordinate [2Fe-2S] cluster: Cys99, Cys131, Cys191, and Arg263.

The protein belongs to the radical SAM superfamily. Biotin synthase family. Homodimer. It depends on [4Fe-4S] cluster as a cofactor. The cofactor is [2Fe-2S] cluster.

It carries out the reaction (4R,5S)-dethiobiotin + (sulfur carrier)-SH + 2 reduced [2Fe-2S]-[ferredoxin] + 2 S-adenosyl-L-methionine = (sulfur carrier)-H + biotin + 2 5'-deoxyadenosine + 2 L-methionine + 2 oxidized [2Fe-2S]-[ferredoxin]. Its pathway is cofactor biosynthesis; biotin biosynthesis; biotin from 7,8-diaminononanoate: step 2/2. In terms of biological role, catalyzes the conversion of dethiobiotin (DTB) to biotin by the insertion of a sulfur atom into dethiobiotin via a radical-based mechanism. The polypeptide is Biotin synthase (Flavobacterium johnsoniae (strain ATCC 17061 / DSM 2064 / JCM 8514 / BCRC 14874 / CCUG 350202 / NBRC 14942 / NCIMB 11054 / UW101) (Cytophaga johnsonae)).